A 581-amino-acid polypeptide reads, in one-letter code: Putative phospholipase B-like 3 (581 aa).

The N-terminal stretch at 1–16 is a signal peptide; it reads MKLLFFLFGLIFAVEQ. Residues Asn50, Asn82, Asn132, Asn169, Asn215, Asn309, Asn543, Asn546, and Asn560 are each glycosylated (N-linked (GlcNAc...) asparagine).

This sequence belongs to the phospholipase B-like family.

The protein localises to the secreted. Putative phospholipase. The protein is Putative phospholipase B-like 3 of Caenorhabditis elegans.